Here is a 77-residue protein sequence, read N- to C-terminus: MVRGRNRRAARRKRAAKRLKMQMWIDAYILQWDLDQAQKDLENARTRMLTEEMERLEEEVEMLMRELELLERMEEDG.

The protein resides in the host cytoplasm. It localises to the host nucleus. The protein localises to the host nucleolus. Its function is as follows. May function as a nucleic acid binding protein that modulates transcription of genes participating in the IFN response. This chain is Protein NS4 (Segment-9), found in Antilocapra americana (Pronghorn).